Consider the following 611-residue polypeptide: Procollagen galactosyltransferase 1-A (611 aa).

A signal peptide spans methionine 1 to alanine 24. 5 N-linked (GlcNAc...) asparagine glycosylation sites follow: asparagine 85, asparagine 173, asparagine 312, asparagine 370, and asparagine 568. Residues tryptophan 575–serine 591 show a composition bias toward basic and acidic residues. Positions tryptophan 575–leucine 611 are disordered. The short motif at arginine 608–leucine 611 is the Prevents secretion from ER element.

The protein belongs to the glycosyltransferase 25 family.

It localises to the endoplasmic reticulum lumen. The catalysed reaction is (5R)-5-hydroxy-L-lysyl-[collagen] + UDP-alpha-D-galactose = (5R)-5-O-(beta-D-galactosyl)-5-hydroxy-L-lysyl-[collagen] + UDP + H(+). Functionally, beta-galactosyltransferase that transfers beta-galactose to hydroxylysine residues of type I collagen. By acting on collagen glycosylation, facilitates the formation of collagen triple helix. The protein is Procollagen galactosyltransferase 1-A (colgalt1-a) of Xenopus laevis (African clawed frog).